The following is a 325-amino-acid chain: MTQQMTLTAEISADLLGYRLDQALAQLFPDYSRSRIKVWIENDLVKVNGIIVNRARGKVFGGEQIEIQAEIEEEIRFEPQNIPLNIVHEDDDIIIINKPKNLVVHPGAGNPDGTVLNALLYYYPPIAEVPRAGIIHRLDKDTTGLMVVAKNIPAQTHLVTALQKRRITREYEAIASGIMTQGGKVDEPMARHPTKRTAMAVHPMGKPAITHYRIMERFRNYTRLRLRLETGRTHQIRVHMAHIAHPLLGDQLYGGRPRPPKGSSEAFLTVLRAFQRQALHATMLRLEHPINGELIECHAPLPADFVELIEALKTDYQRYKEDLYY.

The region spanning 18 to 78 (YRLDQALAQL…AEIEEEIRFE (61 aa)) is the S4 RNA-binding domain. The active site involves Asp-139.

This sequence belongs to the pseudouridine synthase RluA family.

The protein resides in the cytoplasm. It carries out the reaction uridine(1911/1915/1917) in 23S rRNA = pseudouridine(1911/1915/1917) in 23S rRNA. In terms of biological role, responsible for synthesis of pseudouridine from uracil at positions 1911, 1915 and 1917 in 23S ribosomal RNA. The polypeptide is Ribosomal large subunit pseudouridine synthase D (rluD) (Haemophilus ducreyi (strain 35000HP / ATCC 700724)).